A 464-amino-acid polypeptide reads, in one-letter code: 3-deoxy-D-manno-octulosonic acid transferase (464 aa).

The chain crosses the membrane as a helical; Signal-anchor span at residues 2–22; the sequence is MLLYYALSFILLPIYFIIILI. The 47-residue stretch at 47–93 folds into the RPE1 insert domain; that stretch reads YSLDFLHNEANKERFKGDTERRTAAYTSVREDSSTGSTSKLPLEASY. E107 (proton acceptor) is an active-site residue. Residues 311 to 312, 352 to 354, and 377 to 380 contribute to the CMP site; these read PR, FGE, and NILE.

Belongs to the glycosyltransferase group 1 family.

The protein localises to the cell inner membrane. The enzyme catalyses lipid IVA (E. coli) + CMP-3-deoxy-beta-D-manno-octulosonate = alpha-Kdo-(2-&gt;6)-lipid IVA (E. coli) + CMP + H(+). The protein operates within bacterial outer membrane biogenesis; LPS core biosynthesis. In terms of biological role, involved in lipopolysaccharide (LPS) biosynthesis. Catalyzes the transfer of 3-deoxy-D-manno-octulosonate (Kdo) residue(s) from CMP-Kdo to lipid IV(A), the tetraacyldisaccharide-1,4'-bisphosphate precursor of lipid A. This Rickettsia felis (strain ATCC VR-1525 / URRWXCal2) (Rickettsia azadi) protein is 3-deoxy-D-manno-octulosonic acid transferase (waaA).